Consider the following 243-residue polypeptide: Venom nerve growth factor 3 (243 aa).

The signal sequence occupies residues 1-18 (MSMLCYTLIIAFLIGIWA). A propeptide spanning residues 19-125 (APKSEDNVPL…ALNRNIRAKR (107 aa)) is cleaved from the precursor. The span at 47–66 (GLKTSRNTDQRHPAPKKAED) shows a compositional bias: basic and acidic residues. The disordered stretch occupies residues 47–67 (GLKTSRNTDQRHPAPKKAEDQ). Intrachain disulfides connect cysteine 139–cysteine 204, cysteine 182–cysteine 232, and cysteine 192–cysteine 234. Residues asparagine 148 and asparagine 151 are each glycosylated (N-linked (GlcNAc...) asparagine).

Belongs to the NGF-beta family. In terms of assembly, homodimer; non-covalently linked. Expressed by the venom gland.

Its subcellular location is the secreted. Functionally, nerve growth factor is important for the development and maintenance of the sympathetic and sensory nervous systems. It stimulates division and differentiation of sympathetic and embryonic sensory neurons as well as basal forebrain cholinergic neurons in the brain. Its relevance in the snake venom is not clear. However, it has been shown to inhibit metalloproteinase-dependent proteolysis of platelet glycoprotein Ib alpha, suggesting a metalloproteinase inhibition to prevent metalloprotease autodigestion and/or protection against prey proteases. Binds a lipid between the two protein chains in the homodimer. The lipid-bound form promotes histamine relase from mouse mast cells, contrary to the lipid-free form. This is Venom nerve growth factor 3 from Tropidechis carinatus (Australian rough-scaled snake).